We begin with the raw amino-acid sequence, 163 residues long: Protein GOLVEN 3 (163 aa).

An N-terminal signal peptide occupies residues 1–20 (MMRFTIIVIAFLLIIQSLEE). The propeptide occupies 21 to 141 (EHILVYAHEG…MEKLARLLRD (121 aa)). Tyr143 carries the post-translational modification Sulfotyrosine. The disordered stretch occupies residues 144–163 (PIYSKPRRKPPVNNRAPDKF). Pro154 is modified (hydroxyproline). The propeptide occupies 158–163 (RAPDKF).

This sequence belongs to the RGF family. As to quaternary structure, binds to LRR receptor-like serine/threonine-protein kinases RGI1, RGI2 and RGI3 to trigger their dimerization with SERK proteins and subsequent signaling. Expressed in roots, specifically in the root apical meristem (RAM).

Its subcellular location is the secreted. Signaling peptide (root growth factor) required during root gravitropism in a PIN2-traffic dependent manner, thus influencing the formation of auxin gradients. Maintains the postembryonic root stem cell niche. In Arabidopsis thaliana (Mouse-ear cress), this protein is Protein GOLVEN 3.